The following is a 43-amino-acid chain: Protein PsbN (43 aa).

The chain crosses the membrane as a helical span at residues 7-29 (VTIFLSGLLVSFTGYALYTAFGQ).

The protein belongs to the PsbN family.

It localises to the plastid. It is found in the chloroplast thylakoid membrane. May play a role in photosystem I and II biogenesis. The protein is Protein PsbN of Ipomoea purpurea (Common morning glory).